The primary structure comprises 598 residues: NADPH-dependent diflavin oxidoreductase 1 (598 aa).

Residues L6 to W150 enclose the Flavodoxin-like domain. FMN-binding positions include S12–A17, A59–G62, L97–N106, and D132. One can recognise an FAD-binding FR-type domain in the interval L206–K448. Residues R350, R382 to S385, and G416 to S419 each bind FAD. Residues T461, S516–R517, K522–Q526, and D559 each bind NADP(+). W597 is a binding site for FAD.

Belongs to the NADPH-dependent diflavin oxidoreductase NDOR1 family. It in the N-terminal section; belongs to the flavodoxin family. The protein in the C-terminal section; belongs to the flavoprotein pyridine nucleotide cytochrome reductase family. In terms of assembly, interacts with CIAPIN1; as part of the cytosolic iron-sulfur (Fe-S) protein assembly (CIA) machinery. Interacts with DCPS. It depends on FAD as a cofactor. FMN is required as a cofactor.

The protein localises to the cytoplasm. It is found in the perinuclear region. The enzyme catalyses 2 oxidized [2Fe-2S]-[protein] + NADPH = 2 reduced [2Fe-2S]-[protein] + NADP(+) + H(+). NADPH-dependent reductase which is a central component of the cytosolic iron-sulfur (Fe-S) protein assembly (CIA) machinery. Transfers electrons from NADPH via its FAD and FMN prosthetic groups to the [2Fe-2S] cluster of CIAPIN1, another key component of the CIA machinery. In turn, this reduced cluster provides electrons for assembly of cytosolic iron-sulfur cluster proteins. It can also reduce the [2Fe-2S] cluster of CISD1 and activate this protein implicated in Fe/S cluster repair. In vitro can fully activate methionine synthase/MTR in the presence of soluble cytochrome b5/CYB5A. This is NADPH-dependent diflavin oxidoreductase 1 from Mus musculus (Mouse).